Here is a 281-residue protein sequence, read N- to C-terminus: Pantothenate synthetase (281 aa).

30–37 provides a ligand contact to ATP; sequence MGALHAGH. Catalysis depends on His-37, which acts as the Proton donor. (R)-pantoate is bound at residue Gln-64. Gln-64 contributes to the beta-alanine binding site. An ATP-binding site is contributed by 150 to 153; sequence GKKD. Gln-156 serves as a coordination point for (R)-pantoate. ATP-binding positions include Val-179 and 187–190; that span reads YSSR.

It belongs to the pantothenate synthetase family. In terms of assembly, homodimer.

It localises to the cytoplasm. The enzyme catalyses (R)-pantoate + beta-alanine + ATP = (R)-pantothenate + AMP + diphosphate + H(+). It functions in the pathway cofactor biosynthesis; (R)-pantothenate biosynthesis; (R)-pantothenate from (R)-pantoate and beta-alanine: step 1/1. Functionally, catalyzes the condensation of pantoate with beta-alanine in an ATP-dependent reaction via a pantoyl-adenylate intermediate. This chain is Pantothenate synthetase, found in Akkermansia muciniphila (strain ATCC BAA-835 / DSM 22959 / JCM 33894 / BCRC 81048 / CCUG 64013 / CIP 107961 / Muc).